Reading from the N-terminus, the 522-residue chain is Glucans biosynthesis protein G (522 aa).

The signal sequence occupies residues 1–33 (MLDNKFGFKQRVASLRWLSAAIMLSVSAVPAWA).

Belongs to the OpgD/OpgG family.

The protein localises to the periplasm. It functions in the pathway glycan metabolism; osmoregulated periplasmic glucan (OPG) biosynthesis. In terms of biological role, involved in the biosynthesis of osmoregulated periplasmic glucans (OPGs). The sequence is that of Glucans biosynthesis protein G from Pectobacterium carotovorum subsp. carotovorum (strain PC1).